The primary structure comprises 429 residues: MKIEKITGREILDSRGNPTVEVDVVLESGIMGRASVPSGASTGEHEALELRDGDKHRYGGKGVQKAVENVNKVIAPHLIGMSALDQIGIDHAMLALDGTKTKAKLGANAILGVSLAVAKAAANYLDIPLYRYIGGTNTYVLPVPMMNIINGGSHSDAPIAFQEFMIRPVGASSFKEGLRMGAEVFHALKKVLKDRGLSTAVGDEGGFAPNLEGTEDALNSILAAIKAAGYEPGKDVMIGMDCASSEFYHDGIYDYTKFEGEKGKKRTADEQIDYLEKLINEYPIDSIEDGMSENDWEGWKKLTQRIGDRCQLVGDDLFVTNVDFLAKGIEKGCANSILIKVNQIGSLTETLNAIEMAHRHGYTTVTSHRSGETEDATIADIAVATNSGQIKTGSLSRSDRMAKYNQLLRIEEELGDRAVYGYKRIVVKG.

Q162 contributes to the (2R)-2-phosphoglycerate binding site. E204 functions as the Proton donor in the catalytic mechanism. The Mg(2+) site is built by D241, E288, and D315. The (2R)-2-phosphoglycerate site is built by K340, R369, S370, and K391. K340 acts as the Proton acceptor in catalysis.

Belongs to the enolase family. Mg(2+) serves as cofactor.

The protein localises to the cytoplasm. The protein resides in the secreted. Its subcellular location is the cell surface. The catalysed reaction is (2R)-2-phosphoglycerate = phosphoenolpyruvate + H2O. It functions in the pathway carbohydrate degradation; glycolysis; pyruvate from D-glyceraldehyde 3-phosphate: step 4/5. Catalyzes the reversible conversion of 2-phosphoglycerate (2-PG) into phosphoenolpyruvate (PEP). It is essential for the degradation of carbohydrates via glycolysis. This chain is Enolase, found in Bacteroides fragilis (strain ATCC 25285 / DSM 2151 / CCUG 4856 / JCM 11019 / LMG 10263 / NCTC 9343 / Onslow / VPI 2553 / EN-2).